Reading from the N-terminus, the 378-residue chain is Cobalt-precorrin-5B C(1)-methyltransferase (378 aa).

This sequence belongs to the CbiD family.

The catalysed reaction is Co-precorrin-5B + S-adenosyl-L-methionine = Co-precorrin-6A + S-adenosyl-L-homocysteine. It participates in cofactor biosynthesis; adenosylcobalamin biosynthesis; cob(II)yrinate a,c-diamide from sirohydrochlorin (anaerobic route): step 6/10. Functionally, catalyzes the methylation of C-1 in cobalt-precorrin-5B to form cobalt-precorrin-6A. This chain is Cobalt-precorrin-5B C(1)-methyltransferase, found in Photorhabdus laumondii subsp. laumondii (strain DSM 15139 / CIP 105565 / TT01) (Photorhabdus luminescens subsp. laumondii).